We begin with the raw amino-acid sequence, 269 residues long: MIRALLLSTLVAGALSCGLPANLPQLPRVVGGEDARPNSWPWQVSLQYDSSGQWRHTCGGTLVDQSWVLTAAHCISSSRTYRVVLGRHSLSTNEPGSLAVKVSKLVVHQDWNSNQLSNGNDIALLKLASPVSLTDKIQLGCLPAAGTILPNNYVCYVTGWGRLQTNGASPDILQQGQLLVVDYATCSKPGWWGSTVKTNMICAGGDGIISSCNGDSGGPLNCQGANGQWQVHGIVSFGSSLGCNYYHKPSVFTRVSNYIDWINSVIANN.

Residues 1–16 (MIRALLLSTLVAGALS) form the signal peptide. A propeptide spans 17–28 (CGLPANLPQLPR) (activation peptide). Residues 29–267 (VVGGEDARPN…YIDWINSVIA (239 aa)) enclose the Peptidase S1 domain. Cys58 and Cys74 are oxidised to a cystine. Active-site charge relay system residues include His73 and Asp121. Intrachain disulfides connect Cys155/Cys222, Cys186/Cys202, and Cys212/Cys243. Ser216 (charge relay system) is an active-site residue.

The protein belongs to the peptidase S1 family. Elastase subfamily. As to quaternary structure, interacts with CPA1. Interacts with SERPINA1. Pancreas.

Its subcellular location is the secreted. It catalyses the reaction Preferential cleavage: Leu-|-Xaa, Met-|-Xaa and Phe-|-Xaa. Hydrolyzes elastin.. Elastase that enhances insulin signaling and might have a physiologic role in cellular glucose metabolism. Circulates in plasma and reduces platelet hyperactivation, triggers both insulin secretion and degradation, and increases insulin sensitivity. In Sus scrofa (Pig), this protein is Chymotrypsin-like elastase family member 2A (CELA2A).